We begin with the raw amino-acid sequence, 616 residues long: Chaperone protein HscA homolog (616 aa).

The protein belongs to the heat shock protein 70 family.

Its function is as follows. Chaperone involved in the maturation of iron-sulfur cluster-containing proteins. Has a low intrinsic ATPase activity which is markedly stimulated by HscB. The sequence is that of Chaperone protein HscA homolog from Mannheimia succiniciproducens (strain KCTC 0769BP / MBEL55E).